The chain runs to 376 residues: 23S rRNA (uracil(747)-C(5))-methyltransferase RlmC (376 aa).

Cys-3, Cys-11, Cys-14, and Cys-87 together coordinate [4Fe-4S] cluster. Gln-212, Phe-241, Glu-262, and Asn-307 together coordinate S-adenosyl-L-methionine. Cys-334 (nucleophile) is an active-site residue.

Belongs to the class I-like SAM-binding methyltransferase superfamily. RNA M5U methyltransferase family. RlmC subfamily.

The catalysed reaction is uridine(747) in 23S rRNA + S-adenosyl-L-methionine = 5-methyluridine(747) in 23S rRNA + S-adenosyl-L-homocysteine + H(+). Its function is as follows. Catalyzes the formation of 5-methyl-uridine at position 747 (m5U747) in 23S rRNA. This is 23S rRNA (uracil(747)-C(5))-methyltransferase RlmC from Salmonella newport (strain SL254).